The primary structure comprises 79 residues: Dolichyl-diphosphooligosaccharide--protein glycosyltransferase subunit TMEM258 (79 aa).

2 helical membrane-spanning segments follow: residues Val17–Phe37 and Leu55–Val75.

The protein belongs to the OST5 family. As to quaternary structure, component of the oligosaccharyltransferase (OST) complex.

It localises to the membrane. The protein localises to the endoplasmic reticulum. It is found in the cytoplasm. Its pathway is protein modification; protein glycosylation. Subunit of the oligosaccharyl transferase (OST) complex that catalyzes the initial transfer of a defined glycan (Glc(3)Man(9)GlcNAc(2) in eukaryotes) from the lipid carrier dolichol-pyrophosphate to an asparagine residue within an Asn-X-Ser/Thr consensus motif in nascent polypeptide chains, the first step in protein N-glycosylation. N-glycosylation occurs cotranslationally and the complex associates with the Sec61 complex at the channel-forming translocon complex that mediates protein translocation across the endoplasmic reticulum (ER). All subunits are required for a maximal enzyme activity. The protein is Dolichyl-diphosphooligosaccharide--protein glycosyltransferase subunit TMEM258 of Xenopus laevis (African clawed frog).